The chain runs to 124 residues: MNFLLAGIGASIGAMLRYAITNYGKKHWEWIGNKFSNLPTPTLFINLTGAFILGFIFGIKTNVFIYAIVGTGVLGGYTTFSTMNTELVELYKSKNYRGFIFYALSSYLGGLILVFVGYYLAILF.

4 consecutive transmembrane segments (helical) span residues 1 to 21 (MNFL…YAIT), 36 to 58 (SNLP…FIFG), 63 to 85 (VFIY…TMNT), and 104 to 124 (LSSY…AILF). Na(+) is bound by residues Gly-75 and Thr-78.

This sequence belongs to the fluoride channel Fluc/FEX (TC 1.A.43) family. As to quaternary structure, heterodimer composed of FluC1 and FluC2. Neither FluC1 nor FluC2 alone catalyzes fluoride efflux from liposomes.

The protein resides in the cell membrane. The enzyme catalyses fluoride(in) = fluoride(out). Na(+) is not transported, but it plays an essential structural role and its presence is essential for fluoride channel function. Fluoride-specific ion channel. Important for reducing fluoride concentration in the cell, thus reducing its toxicity. This chain is Fluoride-specific ion channel FluC 2, found in Lactobacillus acidophilus (strain ATCC 700396 / NCK56 / N2 / NCFM).